We begin with the raw amino-acid sequence, 424 residues long: L-glutamine:2-deoxy-scyllo-inosose aminotransferase (424 aa).

K202 carries the N6-(pyridoxal phosphate)lysine modification.

This sequence belongs to the DegT/DnrJ/EryC1 family. L-glutamine:2-deoxy-scyllo-inosose/scyllo-inosose aminotransferase subfamily. Pyridoxal 5'-phosphate serves as cofactor.

The enzyme catalyses 2-deoxy-L-scyllo-inosose + L-glutamine = 2-deoxy-scyllo-inosamine + 2-oxoglutaramate. It carries out the reaction 3-amino-2,3-dideoxy-scyllo-inosose + L-glutamine = 2-deoxystreptamine + 2-oxoglutaramate. Its pathway is metabolic intermediate biosynthesis; 2-deoxystreptamine biosynthesis; 2-deoxystreptamine from D-glucose 6-phosphate: step 2/4. The protein operates within antibiotic biosynthesis; lividomycin biosynthesis. Functionally, catalyzes the PLP-dependent transamination of 2-deoxy-scyllo-inosose (2-DOI) to form 2-deoxy-scyllo-inosamine (2-DOIA) using L-glutamine as the amino donor. Also catalyzes the transamination of 3-amino-2,3-dideoxy-scyllo-inosose (keto-2-DOIA) into 2-deoxystreptamine (2-DOS). The sequence is that of L-glutamine:2-deoxy-scyllo-inosose aminotransferase (livS) from Streptomyces lividus.